We begin with the raw amino-acid sequence, 331 residues long: Biotin synthase (331 aa).

The 226-residue stretch at 39–264 (SELQTCYLVS…VFPQSMVRLA (226 aa)) folds into the Radical SAM core domain. Residues Cys-54, Cys-58, and Cys-61 each contribute to the [4Fe-4S] cluster site. Residues Cys-98, Cys-130, Cys-190, and Arg-262 each contribute to the [2Fe-2S] cluster site.

Belongs to the radical SAM superfamily. Biotin synthase family. As to quaternary structure, homodimer. The cofactor is [4Fe-4S] cluster. [2Fe-2S] cluster serves as cofactor.

The catalysed reaction is (4R,5S)-dethiobiotin + (sulfur carrier)-SH + 2 reduced [2Fe-2S]-[ferredoxin] + 2 S-adenosyl-L-methionine = (sulfur carrier)-H + biotin + 2 5'-deoxyadenosine + 2 L-methionine + 2 oxidized [2Fe-2S]-[ferredoxin]. It functions in the pathway cofactor biosynthesis; biotin biosynthesis; biotin from 7,8-diaminononanoate: step 2/2. In terms of biological role, catalyzes the conversion of dethiobiotin (DTB) to biotin by the insertion of a sulfur atom into dethiobiotin via a radical-based mechanism. This is Biotin synthase from Chlamydia abortus (strain DSM 27085 / S26/3) (Chlamydophila abortus).